Reading from the N-terminus, the 130-residue chain is Small ribosomal subunit protein uS9 (130 aa).

Belongs to the universal ribosomal protein uS9 family.

This Alkalilimnicola ehrlichii (strain ATCC BAA-1101 / DSM 17681 / MLHE-1) protein is Small ribosomal subunit protein uS9.